A 282-amino-acid chain; its full sequence is Pyrroline-5-carboxylate reductase (282 aa).

This sequence belongs to the pyrroline-5-carboxylate reductase family.

It catalyses the reaction L-proline + NADP(+) = (S)-1-pyrroline-5-carboxylate + NADPH + 2 H(+). The catalysed reaction is L-proline + NAD(+) = (S)-1-pyrroline-5-carboxylate + NADH + 2 H(+). It functions in the pathway amino-acid biosynthesis; L-proline biosynthesis; L-proline from L-glutamate 5-semialdehyde: step 1/1. The chain is Pyrroline-5-carboxylate reductase (pro3) from Schizosaccharomyces pombe (strain 972 / ATCC 24843) (Fission yeast).